The chain runs to 108 residues: ATP-dependent Clp protease adapter protein ClpS (108 aa).

A compositionally biased stretch (basic and acidic residues) spans 1 to 10; that stretch reads MADSDKHGDE. A disordered region spans residues 1 to 21; it reads MADSDKHGDEGPSTGVVVKAK.

This sequence belongs to the ClpS family. Binds to the N-terminal domain of the chaperone ClpA.

Its function is as follows. Involved in the modulation of the specificity of the ClpAP-mediated ATP-dependent protein degradation. This is ATP-dependent Clp protease adapter protein ClpS from Rhodospirillum centenum (strain ATCC 51521 / SW).